The sequence spans 481 residues: Ras-GEF domain-containing family member 1A (481 aa).

An N-terminal Ras-GEF domain is found at 41-170 (QDGHLISGSL…AIAQMTQSLL (130 aa)). The 248-residue stretch at 214–461 (DPLVLAQQLT…FVASFESEGP (248 aa)) folds into the Ras-GEF domain.

In terms of tissue distribution, detected in brain and spinal cord. Highly expressed in a number of intrahepatic cholangiocarcinoma tissue biopsies.

Functionally, guanine nucleotide exchange factor (GEF) with specificity for RAP2A, KRAS, HRAS, and NRAS (in vitro). Plays a role in cell migration. The polypeptide is Ras-GEF domain-containing family member 1A (RASGEF1A) (Homo sapiens (Human)).